Reading from the N-terminus, the 214-residue chain is NADH-quinone oxidoreductase subunit C (214 aa).

This sequence belongs to the complex I 30 kDa subunit family. In terms of assembly, NDH-1 is composed of 14 different subunits. Subunits NuoB, C, D, E, F, and G constitute the peripheral sector of the complex.

It localises to the cell inner membrane. The catalysed reaction is a quinone + NADH + 5 H(+)(in) = a quinol + NAD(+) + 4 H(+)(out). Its function is as follows. NDH-1 shuttles electrons from NADH, via FMN and iron-sulfur (Fe-S) centers, to quinones in the respiratory chain. The immediate electron acceptor for the enzyme in this species is believed to be ubiquinone. Couples the redox reaction to proton translocation (for every two electrons transferred, four hydrogen ions are translocated across the cytoplasmic membrane), and thus conserves the redox energy in a proton gradient. This is NADH-quinone oxidoreductase subunit C from Francisella tularensis subsp. tularensis (strain WY96-3418).